We begin with the raw amino-acid sequence, 310 residues long: Ribosomal RNA small subunit methyltransferase H (310 aa).

S-adenosyl-L-methionine is bound by residues 32–34, Asp51, Phe78, Asp99, and Gln106; that span reads AGH. The tract at residues 290–310 is disordered; the sequence is GELEDNRRSRSAKLRVAEKQK.

It belongs to the methyltransferase superfamily. RsmH family.

The protein localises to the cytoplasm. It catalyses the reaction cytidine(1402) in 16S rRNA + S-adenosyl-L-methionine = N(4)-methylcytidine(1402) in 16S rRNA + S-adenosyl-L-homocysteine + H(+). Its function is as follows. Specifically methylates the N4 position of cytidine in position 1402 (C1402) of 16S rRNA. The chain is Ribosomal RNA small subunit methyltransferase H from Exiguobacterium sp. (strain ATCC BAA-1283 / AT1b).